The sequence spans 229 residues: Large ribosomal subunit protein uL1 (229 aa).

Belongs to the universal ribosomal protein uL1 family. As to quaternary structure, part of the 50S ribosomal subunit.

Binds directly to 23S rRNA. The L1 stalk is quite mobile in the ribosome, and is involved in E site tRNA release. In terms of biological role, protein L1 is also a translational repressor protein, it controls the translation of the L11 operon by binding to its mRNA. The protein is Large ribosomal subunit protein uL1 of Streptococcus sanguinis (strain SK36).